Reading from the N-terminus, the 345-residue chain is Holliday junction branch migration complex subunit RuvB (345 aa).

Residues 4–182 (PDRIVSAVQR…FGIPIRLEFY (179 aa)) are large ATPase domain (RuvB-L). ATP is bound by residues arginine 22, glycine 63, lysine 66, threonine 67, threonine 68, 129–131 (EDY), arginine 172, tyrosine 182, and arginine 219. Residue threonine 67 participates in Mg(2+) binding. The tract at residues 183 to 253 (TVDELQAIVT…IADAALSRLE (71 aa)) is small ATPAse domain (RuvB-S). Residues 256–345 (ALGLDQLDRR…QSQINLFEEE (90 aa)) are head domain (RuvB-H). 3 residues coordinate DNA: arginine 292, arginine 311, and arginine 316.

It belongs to the RuvB family. Homohexamer. Forms an RuvA(8)-RuvB(12)-Holliday junction (HJ) complex. HJ DNA is sandwiched between 2 RuvA tetramers; dsDNA enters through RuvA and exits via RuvB. An RuvB hexamer assembles on each DNA strand where it exits the tetramer. Each RuvB hexamer is contacted by two RuvA subunits (via domain III) on 2 adjacent RuvB subunits; this complex drives branch migration. In the full resolvosome a probable DNA-RuvA(4)-RuvB(12)-RuvC(2) complex forms which resolves the HJ.

The protein localises to the cytoplasm. It catalyses the reaction ATP + H2O = ADP + phosphate + H(+). Functionally, the RuvA-RuvB-RuvC complex processes Holliday junction (HJ) DNA during genetic recombination and DNA repair, while the RuvA-RuvB complex plays an important role in the rescue of blocked DNA replication forks via replication fork reversal (RFR). RuvA specifically binds to HJ cruciform DNA, conferring on it an open structure. The RuvB hexamer acts as an ATP-dependent pump, pulling dsDNA into and through the RuvAB complex. RuvB forms 2 homohexamers on either side of HJ DNA bound by 1 or 2 RuvA tetramers; 4 subunits per hexamer contact DNA at a time. Coordinated motions by a converter formed by DNA-disengaged RuvB subunits stimulates ATP hydrolysis and nucleotide exchange. Immobilization of the converter enables RuvB to convert the ATP-contained energy into a lever motion, pulling 2 nucleotides of DNA out of the RuvA tetramer per ATP hydrolyzed, thus driving DNA branch migration. The RuvB motors rotate together with the DNA substrate, which together with the progressing nucleotide cycle form the mechanistic basis for DNA recombination by continuous HJ branch migration. Branch migration allows RuvC to scan DNA until it finds its consensus sequence, where it cleaves and resolves cruciform DNA. The protein is Holliday junction branch migration complex subunit RuvB of Chelativorans sp. (strain BNC1).